The sequence spans 520 residues: FNIP repeat-containing protein DDB_G0274063/DDB_G0272642 (520 aa).

2 disordered regions span residues Q47–R86 and N100–S121. A compositionally biased stretch (low complexity) spans N51 to D84. 4 FNIP repeats span residues Y242 to S285, F286 to S331, Y332 to Q406, and F453 to S496.

The sequence is that of FNIP repeat-containing protein DDB_G0274063/DDB_G0272642 from Dictyostelium discoideum (Social amoeba).